The sequence spans 262 residues: Glutamate racemase (262 aa).

Residues 5 to 6 and 37 to 38 contribute to the substrate site; these read DS and YG. The active-site Proton donor/acceptor is Cys69. 70-71 serves as a coordination point for substrate; the sequence is NT. Cys181 (proton donor/acceptor) is an active-site residue. 182-183 contacts substrate; that stretch reads TH.

Belongs to the aspartate/glutamate racemases family.

It catalyses the reaction L-glutamate = D-glutamate. The protein operates within cell wall biogenesis; peptidoglycan biosynthesis. Provides the (R)-glutamate required for cell wall biosynthesis. This Buchnera aphidicola subsp. Acyrthosiphon pisum (strain Tuc7) protein is Glutamate racemase.